The following is a 387-amino-acid chain: Small ribosomal subunit biogenesis GTPase RsgA (387 aa).

A CP-type G domain is found at 112-273 (YDGLKPVAAN…LIDSPGVREF (162 aa)). GTP contacts are provided by residues 159–162 (NKID) and 213–221 (GQSGVGKSS). Positions 297, 302, 304, and 310 each coordinate Zn(2+).

This sequence belongs to the TRAFAC class YlqF/YawG GTPase family. RsgA subfamily. As to quaternary structure, monomer. Associates with 30S ribosomal subunit, binds 16S rRNA. Zn(2+) is required as a cofactor.

The protein localises to the cytoplasm. Functionally, one of several proteins that assist in the late maturation steps of the functional core of the 30S ribosomal subunit. Helps release RbfA from mature subunits. May play a role in the assembly of ribosomal proteins into the subunit. Circularly permuted GTPase that catalyzes slow GTP hydrolysis, GTPase activity is stimulated by the 30S ribosomal subunit. The chain is Small ribosomal subunit biogenesis GTPase RsgA from Vibrio cholerae serotype O1 (strain ATCC 39315 / El Tor Inaba N16961).